We begin with the raw amino-acid sequence, 254 residues long: Type III pantothenate kinase (254 aa).

An ATP-binding site is contributed by 6-13 (DVGNTNTV). Residues Tyr-100 and 107-110 (GADR) each bind substrate. Asp-109 serves as the catalytic Proton acceptor. Asp-129 serves as a coordination point for K(+). Residue Thr-132 participates in ATP binding. Position 184 (Thr-184) interacts with substrate.

Belongs to the type III pantothenate kinase family. In terms of assembly, homodimer. It depends on NH4(+) as a cofactor. The cofactor is K(+).

The protein resides in the cytoplasm. It catalyses the reaction (R)-pantothenate + ATP = (R)-4'-phosphopantothenate + ADP + H(+). The protein operates within cofactor biosynthesis; coenzyme A biosynthesis; CoA from (R)-pantothenate: step 1/5. In terms of biological role, catalyzes the phosphorylation of pantothenate (Pan), the first step in CoA biosynthesis. This Halalkalibacterium halodurans (strain ATCC BAA-125 / DSM 18197 / FERM 7344 / JCM 9153 / C-125) (Bacillus halodurans) protein is Type III pantothenate kinase.